The primary structure comprises 151 residues: Large ribosomal subunit protein bL9 (151 aa).

It belongs to the bacterial ribosomal protein bL9 family.

Functionally, binds to the 23S rRNA. The chain is Large ribosomal subunit protein bL9 from Chlorobium phaeobacteroides (strain DSM 266 / SMG 266 / 2430).